A 216-amino-acid polypeptide reads, in one-letter code: Large ribosomal subunit protein uL3 (216 aa).

Belongs to the universal ribosomal protein uL3 family. As to quaternary structure, part of the 50S ribosomal subunit. Forms a cluster with proteins L14 and L19.

Functionally, one of the primary rRNA binding proteins, it binds directly near the 3'-end of the 23S rRNA, where it nucleates assembly of the 50S subunit. The chain is Large ribosomal subunit protein uL3 from Symbiobacterium thermophilum (strain DSM 24528 / JCM 14929 / IAM 14863 / T).